The sequence spans 118 residues: Small nuclear ribonucleoprotein Sm D2 (118 aa).

The tract at residues 1 to 31 is disordered; it reads MSLLNKPKSEMTPEELQKREEEEFNTGPLSV. Ser2 bears the N-acetylserine mark. Glycyl lysine isopeptide (Lys-Gly) (interchain with G-Cter in SUMO2) cross-links involve residues Lys6 and Lys8. Residues 7–21 show a composition bias toward basic and acidic residues; it reads PKSEMTPEELQKREE. At Ser9 the chain carries Phosphoserine. Position 12 is a phosphothreonine (Thr12). Residues 29-115 form the Sm domain; it reads LSVLTQSVKN…VIVVLRNPLI (87 aa).

It belongs to the snRNP core protein family. As to quaternary structure, core component of the spliceosomal U1, U2, U4 and U5 small nuclear ribonucleoproteins (snRNPs), the building blocks of the spliceosome. Most spliceosomal snRNPs contain a common set of Sm proteins, SNRPB, SNRPD1, SNRPD2, SNRPD3, SNRPE, SNRPF and SNRPG that assemble in a heptameric protein ring on the Sm site of the small nuclear RNA to form the core snRNP. Component of the U1 snRNP. The U1 snRNP is composed of the U1 snRNA and the 7 core Sm proteins SNRPB, SNRPD1, SNRPD2, SNRPD3, SNRPE, SNRPF and SNRPG, and at least three U1 snRNP-specific proteins SNRNP70/U1-70K, SNRPA/U1-A and SNRPC/U1-C. Component of the U4/U6-U5 tri-snRNP complex composed of the U4, U6 and U5 snRNAs and at least PRPF3, PRPF4, PRPF6, PRPF8, PRPF31, SNRNP200, TXNL4A, SNRNP40, SNRPB, SNRPD1, SNRPD2, SNRPD3, SNRPE, SNRPF, SNRPG, DDX23, CD2BP2, PPIH, SNU13, EFTUD2, SART1 and USP39, plus LSM2, LSM3, LSM4, LSM5, LSM6, LSM7 and LSM8. Component of the minor spliceosome, which splices U12-type introns. Part of the SMN-Sm complex that contains SMN1, GEMIN2/SIP1, DDX20/GEMIN3, GEMIN4, GEMIN5, GEMIN6, GEMIN7, GEMIN8, STRAP/UNRIP and the Sm proteins SNRPB, SNRPD1, SNRPD2, SNRPD3, SNRPE, SNRPF and SNRPG; catalyzes core snRNPs assembly. Forms a 6S pICln-Sm complex composed of CLNS1A/pICln, SNRPD1, SNRPD2, SNRPE, SNRPF and SNRPG; ring-like structure where CLNS1A/pICln mimics additional Sm proteins and which is unable to assemble into the core snRNP. Interacts with SMN1; the interaction is direct. Interacts with GEMIN2; the interaction is direct. Interacts with SNRPD1; the interaction is direct. Interacts with SNRPF; the interaction is direct.

It is found in the cytoplasm. The protein localises to the cytosol. It localises to the nucleus. Functionally, plays a role in pre-mRNA splicing as a core component of the spliceosomal U1, U2, U4 and U5 small nuclear ribonucleoproteins (snRNPs), the building blocks of the spliceosome. Component of both the pre-catalytic spliceosome B complex and activated spliceosome C complexes. As a component of the minor spliceosome, involved in the splicing of U12-type introns in pre-mRNAs. The chain is Small nuclear ribonucleoprotein Sm D2 (SNRPD2) from Homo sapiens (Human).